Here is a 90-residue protein sequence, read N- to C-terminus: Large ribosomal subunit protein eL37 (90 aa).

The A20-type zinc finger occupies 13–46 (NKSHTLCNRCGRRSFHVQKKTCSSCGYPAAKMRS). Residues cysteine 19, cysteine 22, cysteine 34, and cysteine 37 each contribute to the Zn(2+) site.

It belongs to the eukaryotic ribosomal protein eL37 family. Component of the large ribosomal subunit. Mature ribosomes consist of a small (40S) and a large (60S) subunit. The 40S subunit contains about 32 different proteins and 1 molecule of RNA (18S). The 60S subunit contains 45 different proteins and 3 molecules of RNA (25S, 5.8S and 5S). Zn(2+) serves as cofactor.

It is found in the cytoplasm. Component of the ribosome, a large ribonucleoprotein complex responsible for the synthesis of proteins in the cell. The small ribosomal subunit (SSU) binds messenger RNAs (mRNAs) and translates the encoded message by selecting cognate aminoacyl-transfer RNA (tRNA) molecules. The large subunit (LSU) contains the ribosomal catalytic site termed the peptidyl transferase center (PTC), which catalyzes the formation of peptide bonds, thereby polymerizing the amino acids delivered by tRNAs into a polypeptide chain. The nascent polypeptides leave the ribosome through a tunnel in the LSU and interact with protein factors that function in enzymatic processing, targeting, and the membrane insertion of nascent chains at the exit of the ribosomal tunnel. The polypeptide is Large ribosomal subunit protein eL37 (Candida albicans (strain SC5314 / ATCC MYA-2876) (Yeast)).